A 350-amino-acid polypeptide reads, in one-letter code: Dihydroorotate dehydrogenase (quinone) (350 aa).

Residues 61-65 (AGLDK) and Thr85 each bind FMN. Lys65 lines the substrate pocket. 110-114 (NRMGF) provides a ligand contact to substrate. Asn139 and Asn172 together coordinate FMN. Asn172 lines the substrate pocket. The active-site Nucleophile is the Ser175. Asn177 lines the substrate pocket. FMN is bound by residues Lys217 and Thr245. 246–247 (NT) contributes to the substrate binding site. FMN contacts are provided by residues Gly268, Gly297, and 318–319 (YS).

This sequence belongs to the dihydroorotate dehydrogenase family. Type 2 subfamily. In terms of assembly, monomer. The cofactor is FMN.

Its subcellular location is the cell membrane. It carries out the reaction (S)-dihydroorotate + a quinone = orotate + a quinol. It participates in pyrimidine metabolism; UMP biosynthesis via de novo pathway; orotate from (S)-dihydroorotate (quinone route): step 1/1. In terms of biological role, catalyzes the conversion of dihydroorotate to orotate with quinone as electron acceptor. This chain is Dihydroorotate dehydrogenase (quinone), found in Flavobacterium lutescens.